The chain runs to 439 residues: Glutamyl-tRNA(Gln) amidotransferase subunit D (439 aa).

The region spanning 88–419 is the Asparaginase/glutaminase domain; the sequence is GKVKIISTGG…EEVKRIMLTN (332 aa). Active-site residues include threonine 98, threonine 174, aspartate 175, and lysine 253.

This sequence belongs to the asparaginase 1 family. GatD subfamily. As to quaternary structure, heterodimer of GatD and GatE.

The enzyme catalyses L-glutamyl-tRNA(Gln) + L-glutamine + ATP + H2O = L-glutaminyl-tRNA(Gln) + L-glutamate + ADP + phosphate + H(+). In terms of biological role, allows the formation of correctly charged Gln-tRNA(Gln) through the transamidation of misacylated Glu-tRNA(Gln) in organisms which lack glutaminyl-tRNA synthetase. The reaction takes place in the presence of glutamine and ATP through an activated gamma-phospho-Glu-tRNA(Gln). The GatDE system is specific for glutamate and does not act on aspartate. This Metallosphaera sedula (strain ATCC 51363 / DSM 5348 / JCM 9185 / NBRC 15509 / TH2) protein is Glutamyl-tRNA(Gln) amidotransferase subunit D.